The following is a 98-amino-acid chain: NADH-ubiquinone oxidoreductase chain 4L (98 aa).

3 helical membrane-spanning segments follow: residues 1–21 (MSLT…GLLM), 29–49 (SLLC…ITIL), and 61–81 (IILL…LVMV).

This sequence belongs to the complex I subunit 4L family. As to quaternary structure, core subunit of respiratory chain NADH dehydrogenase (Complex I) which is composed of 45 different subunits.

It is found in the mitochondrion inner membrane. It catalyses the reaction a ubiquinone + NADH + 5 H(+)(in) = a ubiquinol + NAD(+) + 4 H(+)(out). Its function is as follows. Core subunit of the mitochondrial membrane respiratory chain NADH dehydrogenase (Complex I) which catalyzes electron transfer from NADH through the respiratory chain, using ubiquinone as an electron acceptor. Part of the enzyme membrane arm which is embedded in the lipid bilayer and involved in proton translocation. This chain is NADH-ubiquinone oxidoreductase chain 4L (MT-ND4L), found in Artibeus jamaicensis (Jamaican fruit-eating bat).